Here is a 24-residue protein sequence, read N- to C-terminus: Gaegurin-6 (24 aa).

A disulfide bridge links C18 with C24.

This sequence belongs to the frog skin active peptide (FSAP) family. Brevinin subfamily. In terms of assembly, monomer. As to expression, expressed by the skin glands.

Its subcellular location is the secreted. Its function is as follows. Has a non-hemolytic activity. Has a broad spectrum of activity against both Gram-positive and Gram-negative bacteria, fungi and protozoa. The protein is Gaegurin-6 (GGN6) of Glandirana rugosa (Japanese wrinkled frog).